The following is a 466-amino-acid chain: Glutamate--tRNA ligase 1 (466 aa).

The short motif at 9 to 19 (PSPTGMLHIGG) is the 'HIGH' region element. Positions 238–242 (KLSKR) match the 'KMSKS' region motif. K241 lines the ATP pocket.

Belongs to the class-I aminoacyl-tRNA synthetase family. Glutamate--tRNA ligase type 1 subfamily. Monomer.

Its subcellular location is the cytoplasm. The catalysed reaction is tRNA(Glu) + L-glutamate + ATP = L-glutamyl-tRNA(Glu) + AMP + diphosphate. Catalyzes the attachment of glutamate to tRNA(Glu) in a two-step reaction: glutamate is first activated by ATP to form Glu-AMP and then transferred to the acceptor end of tRNA(Glu). The protein is Glutamate--tRNA ligase 1 of Acidiphilium cryptum (strain JF-5).